Reading from the N-terminus, the 616-residue chain is Dihydroxy-acid dehydratase (616 aa).

Position 81 (aspartate 81) interacts with Mg(2+). Cysteine 122 lines the [2Fe-2S] cluster pocket. Residues aspartate 123 and lysine 124 each contribute to the Mg(2+) site. Lysine 124 is subject to N6-carboxylysine. Residue cysteine 195 coordinates [2Fe-2S] cluster. Glutamate 491 provides a ligand contact to Mg(2+). Serine 517 serves as the catalytic Proton acceptor.

Belongs to the IlvD/Edd family. In terms of assembly, homodimer. It depends on [2Fe-2S] cluster as a cofactor. The cofactor is Mg(2+).

The catalysed reaction is (2R)-2,3-dihydroxy-3-methylbutanoate = 3-methyl-2-oxobutanoate + H2O. It catalyses the reaction (2R,3R)-2,3-dihydroxy-3-methylpentanoate = (S)-3-methyl-2-oxopentanoate + H2O. It participates in amino-acid biosynthesis; L-isoleucine biosynthesis; L-isoleucine from 2-oxobutanoate: step 3/4. The protein operates within amino-acid biosynthesis; L-valine biosynthesis; L-valine from pyruvate: step 3/4. Functionally, functions in the biosynthesis of branched-chain amino acids. Catalyzes the dehydration of (2R,3R)-2,3-dihydroxy-3-methylpentanoate (2,3-dihydroxy-3-methylvalerate) into 2-oxo-3-methylpentanoate (2-oxo-3-methylvalerate) and of (2R)-2,3-dihydroxy-3-methylbutanoate (2,3-dihydroxyisovalerate) into 2-oxo-3-methylbutanoate (2-oxoisovalerate), the penultimate precursor to L-isoleucine and L-valine, respectively. This chain is Dihydroxy-acid dehydratase, found in Tolumonas auensis (strain DSM 9187 / NBRC 110442 / TA 4).